The primary structure comprises 919 residues: Chaperone protein ClpC2, chloroplastic (919 aa).

Residues 1–54 (MAGTLLQPVALGTTFAGRVSGQRWKSHGTRRPPSMLAMSLSRPVKMAAFVGLRS) constitute a chloroplast transit peptide. The region spanning 89–231 (FERFTEKAIK…RTQVIRMIGE (143 aa)) is the Clp R domain. Repeat stretches follow at residues 92 to 157 (FTEK…IGRG) and 167 to 231 (FTPR…MIGE). Residues 252–499 (LEEYGTNLTK…RVRLRHAQVP (248 aa)) form an i region. Residue 297–304 (GEPGVGKT) coordinates ATP. In terms of domain architecture, UVR spans 506 to 541 (DKELKQITKDKNEAVRSQDFEKAGELRDREMELKAQ). Positions 566–757 (VNEADIQHIV…LLIMTSNVGS (192 aa)) are II. 640–647 (GPTGVGKS) contacts ATP.

The protein belongs to the ClpA/ClpB family. ClpC subfamily.

The protein localises to the plastid. It is found in the chloroplast. Functionally, molecular chaperone that may interact with a ClpP-like protease involved in degradation of denatured proteins in the chloroplast. This Oryza sativa subsp. japonica (Rice) protein is Chaperone protein ClpC2, chloroplastic (CLPC2).